We begin with the raw amino-acid sequence, 1091 residues long: Error-prone DNA polymerase 1 (1091 aa).

Residues 1051–1064 (RGDEFHHGMPDDHR) show a composition bias toward basic and acidic residues. Residues 1051–1080 (RGDEFHHGMPDDHRAIRKRPPPSNHDDDEV) form a disordered region.

It belongs to the DNA polymerase type-C family. DnaE2 subfamily.

The protein localises to the cytoplasm. It carries out the reaction DNA(n) + a 2'-deoxyribonucleoside 5'-triphosphate = DNA(n+1) + diphosphate. DNA polymerase involved in damage-induced mutagenesis and translesion synthesis (TLS). It is not the major replicative DNA polymerase. This chain is Error-prone DNA polymerase 1, found in Agrobacterium fabrum (strain C58 / ATCC 33970) (Agrobacterium tumefaciens (strain C58)).